The chain runs to 355 residues: 3-isopropylmalate dehydrogenase (355 aa).

Residues arginine 90, arginine 100, arginine 128, and aspartate 222 each contribute to the substrate site. Mg(2+) is bound by residues aspartate 222, aspartate 246, and aspartate 250. 280–292 (GSAPDIAGKGVAN) is an NAD(+) binding site.

The protein belongs to the isocitrate and isopropylmalate dehydrogenases family. LeuB type 1 subfamily. As to quaternary structure, homodimer. The cofactor is Mg(2+). Mn(2+) is required as a cofactor.

It is found in the cytoplasm. It catalyses the reaction (2R,3S)-3-isopropylmalate + NAD(+) = 4-methyl-2-oxopentanoate + CO2 + NADH. It functions in the pathway amino-acid biosynthesis; L-leucine biosynthesis; L-leucine from 3-methyl-2-oxobutanoate: step 3/4. Its function is as follows. Catalyzes the oxidation of 3-carboxy-2-hydroxy-4-methylpentanoate (3-isopropylmalate) to 3-carboxy-4-methyl-2-oxopentanoate. The product decarboxylates to 4-methyl-2 oxopentanoate. The protein is 3-isopropylmalate dehydrogenase of Cupriavidus pinatubonensis (strain JMP 134 / LMG 1197) (Cupriavidus necator (strain JMP 134)).